The primary structure comprises 219 residues: Proteasome subunit beta type-9 (219 aa).

A propeptide spans 1–20 (removed in mature form); the sequence is MLRAGAPTAGSFRTKEVHTG. The active-site Nucleophile is T21. Residues K53 and K109 each carry the N6-acetyllysine modification.

The protein belongs to the peptidase T1B family. The 26S proteasome consists of a 20S proteasome core and two 19S regulatory subunits. The 20S proteasome core is composed of 28 subunits that are arranged in four stacked rings, resulting in a barrel-shaped structure. The two end rings are each formed by seven alpha subunits, and the two central rings are each formed by seven beta subunits. The catalytic chamber with the active sites is on the inside of the barrel. Component of the immunoproteasome, where it displaces the equivalent housekeeping subunit PSMB6. Component of the spermatoproteasome, a form of the proteasome specifically found in testis. Autocleaved. The resulting N-terminal Thr residue of the mature subunit is responsible for the nucleophile proteolytic activity.

The protein localises to the cytoplasm. It localises to the nucleus. It catalyses the reaction Cleavage of peptide bonds with very broad specificity.. Its function is as follows. The proteasome is a multicatalytic proteinase complex which is characterized by its ability to cleave peptides with Arg, Phe, Tyr, Leu, and Glu adjacent to the leaving group at neutral or slightly basic pH. The proteasome has an ATP-dependent proteolytic activity. This subunit is involved in antigen processing to generate class I binding peptides. This chain is Proteasome subunit beta type-9 (Psmb9), found in Mus platythrix (Flat-haired mouse).